Consider the following 428-residue polypeptide: Serine--tRNA ligase (428 aa).

237–239 (TAE) provides a ligand contact to L-serine. 268 to 270 (RSE) lines the ATP pocket. Residue E291 coordinates L-serine. ATP is bound at residue 355-358 (EISS). S390 serves as a coordination point for L-serine.

Belongs to the class-II aminoacyl-tRNA synthetase family. Type-1 seryl-tRNA synthetase subfamily. Homodimer. The tRNA molecule binds across the dimer.

It localises to the cytoplasm. The catalysed reaction is tRNA(Ser) + L-serine + ATP = L-seryl-tRNA(Ser) + AMP + diphosphate + H(+). It carries out the reaction tRNA(Sec) + L-serine + ATP = L-seryl-tRNA(Sec) + AMP + diphosphate + H(+). Its pathway is aminoacyl-tRNA biosynthesis; selenocysteinyl-tRNA(Sec) biosynthesis; L-seryl-tRNA(Sec) from L-serine and tRNA(Sec): step 1/1. In terms of biological role, catalyzes the attachment of serine to tRNA(Ser). Is also able to aminoacylate tRNA(Sec) with serine, to form the misacylated tRNA L-seryl-tRNA(Sec), which will be further converted into selenocysteinyl-tRNA(Sec). This chain is Serine--tRNA ligase, found in Hydrogenovibrio crunogenus (strain DSM 25203 / XCL-2) (Thiomicrospira crunogena).